Reading from the N-terminus, the 122-residue chain is Ribonuclease P protein component 1 (122 aa).

It belongs to the eukaryotic/archaeal RNase P protein component 1 family. As to quaternary structure, consists of a catalytic RNA component and at least 4-5 protein subunits.

Its subcellular location is the cytoplasm. It carries out the reaction Endonucleolytic cleavage of RNA, removing 5'-extranucleotides from tRNA precursor.. Its function is as follows. Part of ribonuclease P, a protein complex that generates mature tRNA molecules by cleaving their 5'-ends. The chain is Ribonuclease P protein component 1 from Thermococcus sibiricus (strain DSM 12597 / MM 739).